Here is a 287-residue protein sequence, read N- to C-terminus: Octanoyl-[GcvH]:protein N-octanoyltransferase (287 aa).

The region spanning 45 to 253 (GESPATARSW…ELKELSGRLY (209 aa)) is the BPL/LPL catalytic domain. The active-site Acyl-thioester intermediate is the cysteine 150.

This sequence belongs to the octanoyltransferase LipL family.

It carries out the reaction N(6)-octanoyl-L-lysyl-[glycine-cleavage complex H protein] + L-lysyl-[lipoyl-carrier protein] = N(6)-octanoyl-L-lysyl-[lipoyl-carrier protein] + L-lysyl-[glycine-cleavage complex H protein]. It functions in the pathway protein modification; protein lipoylation via endogenous pathway; protein N(6)-(lipoyl)lysine from octanoyl-[acyl-carrier-protein]. In terms of biological role, catalyzes the amidotransfer (transamidation) of the octanoyl moiety from octanoyl-GcvH to the lipoyl domain of the E2 subunit of lipoate-dependent enzymes. This chain is Octanoyl-[GcvH]:protein N-octanoyltransferase, found in Bacillus velezensis (strain DSM 23117 / BGSC 10A6 / LMG 26770 / FZB42) (Bacillus amyloliquefaciens subsp. plantarum).